A 293-amino-acid polypeptide reads, in one-letter code: Pantothenate synthetase (293 aa).

Met-30–His-37 provides a ligand contact to ATP. The active-site Proton donor is His-37. (R)-pantoate is bound at residue Gln-61. Gln-61 contacts beta-alanine. An ATP-binding site is contributed by Gly-147–Asp-150. Gln-153 contacts (R)-pantoate. ATP is bound by residues Val-176 and Cys-184–Arg-187.

This sequence belongs to the pantothenate synthetase family. Homodimer.

The protein resides in the cytoplasm. It carries out the reaction (R)-pantoate + beta-alanine + ATP = (R)-pantothenate + AMP + diphosphate + H(+). It functions in the pathway cofactor biosynthesis; (R)-pantothenate biosynthesis; (R)-pantothenate from (R)-pantoate and beta-alanine: step 1/1. Its function is as follows. Catalyzes the condensation of pantoate with beta-alanine in an ATP-dependent reaction via a pantoyl-adenylate intermediate. This is Pantothenate synthetase from Brucella abortus (strain S19).